The following is a 1721-amino-acid chain: MKEEEIANLGPQEYFNYLEGINKKIIIELKTVANIDTAKDTDNLQNILIESSLALEHNIRNLLYFVDKCPISYDQIVHYHSHFKEVVKIFFQVCQDLIKAAQALILNSCDYLTTSNFAKCRGEAIKTIKNTMATCSNFEKLYYNPDLQLEDEVDLVHQQQQKEQEQQQKEQEQYEQEQLILKQLKEQELKKQQEQQQQQQQQQQQQQQQQQQQQQKHQEEKEKNDQKEKEEKLKKQLLAEQQKQKQEELERQQQQLQQQQQLLQQQQQLLQQQQQQQRSDPIIIPPITLKTSQSDLLSGGLSPKVNSPGSPNLGKFTESAERVANFDRGTANIILNMNKIKEISLSGDSEQAPEIVTAARIISENIAIISKELRYKTLGTNLSEHFVSVVQVARLAIKNKSDQFYQDQLELAIEKFNDTMRKIIYSVKSISKSSMNLRQFGVDESSLGRSPVVSPEKSISPSFTSSTSERILSHEIKNHNNNNNNYNNSSTNNLQTSFSTPSLSSNHSQQPNQQPLQSPLLINQLQSTSSSSSSSSSNLSNSLNSIQLPQATTTTTTATSPSTSTSTSTSTSPNSSSLSISDQDKQLKRKEKQHQIVIPKDVKDSVANQQQQQQQQQNGTTSPRNNESSVTAATTTTTSTTASITTNVNTIPNFPPNKQLPATPTTGTPSTSTPTPQTPTSTSQNDKQNENNNKENFVDKQKTLGKLFSKFVHKKRTPLPGFDSSNSSSPSNNSNTTNSSSHSSTNSSPMETSPGVESPKITKSPSQNNILVDSLDIGSDNQQQQQDKLTTTTSTTTITINNNNNNNNNNNNNNNNNNNNIQQQQQQQQQIPTTPNKLSNSIAMNSSNRLMTPKKERSFTIGLVSGKHSCVVVETPKSKKLFQHESAKQILSIISMNFPSFEKEFQMQNSEVISNIIEQIGNVIKNYHDEVSESSSSSSSSTTSPNNINTPSDCSPILNSENSKDSHNLSSINNSSYDPVSPALRKMYENGSYDSKEHSRSSIQSKITRKLGTIRKKGPSPFNMLLNSSTGSLSSLYLDQLNGGNGDSSSSSSSSYNLVGGSGISGYDNQNEIDASEHLVSTSSLFTEEAIELVSKCFEASIIVNHSGGTSSEIKALFSSTLDHLESMLQSSVNFGKIDPSSFCMTFLKNIRQHIPTMKSKGGKCDPTLVTAATKLFRHTILSNLDKSIHSLCHSVRVLAIQMTIIVISISAKPWDISSQLQLFASAKSFIDSLVSLLDAVENKIYISTNTNIQDDVEVPTIDDTEDTNIWEEADSPLTFGWISDEGSKTGRYVPKAGTLNKLISALTQDNKHDISRYTKTFLLTYQSFTNPWKLMEKLIQRYNVPLDEKPDVRATTQLRVVSFMQTWIERNFNDFDDQLIGQLKEFRTRLLMDNNNDLAVILGGLIKKKEAERSLSKERSTNHLTFPELMIPDGQKSPTALFLLLNESEIARQLTLIDFNIFSKIQPTELLDQSWNKDSLKFKSPNVIEMINRANKFSFWVSSQILWQEDIEERVKVFEKFILISKYLREMNNFNTLLAIFTGLNTAPILRLKKTFALLSPNSLSIYNSLEKLMNSSGSYKNYRSVSKNPPLLPYLPVILSDLTFMEDGNPDKINNLINFQKRELICRVISEVQQCQQQTKYEFPVVEPIHTLLTELPSSTPSELYQLSLIREPRETNQSNANSSISSGSNFLSNSSNHNIGNNNGFDTLKKYYKSSNNN.

A coiled-coil region spans residues 148–279; that stretch reads QLEDEVDLVH…LQQQQQQQRS (132 aa). 6 disordered regions span residues 213-232, 445-515, 551-701, 716-766, 797-837, and 929-981; these read QQQK…KEEK, SSLG…NQQP, ATTT…VDKQ, RTPL…KSPS, TITI…TPNK, and DEVS…DPVS. The span at 216–232 shows a compositional bias: basic and acidic residues; sequence KHQEEKEKNDQKEKEEK. Low complexity-rich tracts occupy residues 454 to 469, 479 to 493, 501 to 515, and 551 to 581; these read SPEK…STSE, HNNN…STNN, PSLS…NQQP, and ATTT…LSIS. A compositionally biased stretch (polar residues) spans 618-627; that stretch reads NGTTSPRNNE. Composition is skewed to low complexity over residues 628–651 and 663–686; these read SSVT…VNTI and TPTT…SQND. A compositionally biased stretch (basic and acidic residues) spans 687–701; that stretch reads KQNENNNKENFVDKQ. 3 stretches are compositionally biased toward low complexity: residues 724-748, 797-836, and 933-952; these read SSNS…TNSS, TITI…TTPN, and ESSS…NTPS. Positions 802-831 form a coiled coil; that stretch reads NNNNNNNNNNNNNNNNNNNIQQQQQQQQQI. Positions 968–978 are enriched in polar residues; the sequence is NLSSINNSSYD. In terms of domain architecture, N-terminal Ras-GEF spans 1291–1411; that stretch reads GRYVPKAGTL…ILGGLIKKKE (121 aa). In terms of domain architecture, Ras-GEF spans 1447-1676; it reads NESEIARQLT…YQLSLIREPR (230 aa).

In terms of processing, phosphorylated on threonine residues.

Promotes the exchange of Ras-bound GDP by GTP. May also play a role in the activation of rasG. This Dictyostelium discoideum (Social amoeba) protein is Ras guanine nucleotide exchange factor R (gefR).